A 690-amino-acid polypeptide reads, in one-letter code: Copper-exporting P-type ATPase B (690 aa).

Topologically, residues 1-64 (MHEHDSHGEA…MEDFKKRFYV (64 aa)) are cytoplasmic. Positions 23 to 46 (QHHEHHGHEEEHSAHHEKMKHSAD) are disordered. Basic and acidic residues predominate over residues 28–46 (HGHEEEHSAHHEKMKHSAD). A helical transmembrane segment spans residues 65-85 (STLLTIPILILSPAIQTFLGF). Topologically, residues 86-91 (RVEFAG) are extracellular. Residues 92-112 (SLYILFLLSSAVYFYGGYPFL) form a helical membrane-spanning segment. Topologically, residues 113–127 (KGIFDELRRRQPGMM) are cytoplasmic. Residues 128-148 (TLIAVAISVAYFYSSAVVFGL) traverse the membrane as a helical segment. Residues 149 to 151 (KGK) are Extracellular-facing. A helical transmembrane segment spans residues 152–172 (FFFWELATLIDIMLLGHYIEM). Topologically, residues 173-303 (RSVLGASRAL…KSRTQDLANR (131 aa)) are cytoplasmic. The helical transmembrane segment at 304–324 (AALLLTVIALTVGSVTLAIWL) threads the bilayer. At 325–336 (AYIADFAFAIER) the chain is on the extracellular side. The chain crosses the membrane as a helical span at residues 337–357 (AVTVMVITCPHALGLAIPLVV). Residues 358-640 (AVSTSLAAKS…RKTYSKMKQN (283 aa)) lie on the Cytoplasmic side of the membrane. Asp389 (4-aspartylphosphate intermediate) is an active-site residue. Residues 390–391 (KT), 537–538 (TG), and Lys565 each bind phosphate. Mg(2+) contacts are provided by Asp583 and Asp587. Residues 641-661 (LLWATGYNAFAIPLAAGVLYS) form a helical membrane-spanning segment. Residues 662–663 (AG) are Extracellular-facing. A helical membrane pass occupies residues 664–684 (ILLSPAVGAILMSLSTVIVAI). Over 685-690 (NARLLR) the chain is Cytoplasmic.

This sequence belongs to the cation transport ATPase (P-type) (TC 3.A.3) family. Type IB subfamily.

Its subcellular location is the cell membrane. The enzyme catalyses Cu(2+)(in) + ATP + H2O = Cu(2+)(out) + ADP + phosphate + H(+). Activated by Cu(2+) and to a lesser extent by Ag(+) and Cu(+). In terms of biological role, involved in copper export. The sequence is that of Copper-exporting P-type ATPase B (copB) from Archaeoglobus fulgidus (strain ATCC 49558 / DSM 4304 / JCM 9628 / NBRC 100126 / VC-16).